The primary structure comprises 389 residues: Nicotinate phosphoribosyltransferase (389 aa).

Residue His216 is modified to Phosphohistidine; by autocatalysis.

It belongs to the NAPRTase family. Transiently phosphorylated on a His residue during the reaction cycle. Phosphorylation strongly increases the affinity for substrates and increases the rate of nicotinate D-ribonucleotide production. Dephosphorylation regenerates the low-affinity form of the enzyme, leading to product release.

The catalysed reaction is nicotinate + 5-phospho-alpha-D-ribose 1-diphosphate + ATP + H2O = nicotinate beta-D-ribonucleotide + ADP + phosphate + diphosphate. It participates in cofactor biosynthesis; NAD(+) biosynthesis; nicotinate D-ribonucleotide from nicotinate: step 1/1. Catalyzes the synthesis of beta-nicotinate D-ribonucleotide from nicotinate and 5-phospho-D-ribose 1-phosphate at the expense of ATP. This chain is Nicotinate phosphoribosyltransferase, found in Ralstonia pickettii (strain 12J).